A 180-amino-acid chain; its full sequence is Translation initiation factor IF-3 (180 aa).

The protein belongs to the IF-3 family. As to quaternary structure, monomer.

Its subcellular location is the cytoplasm. Its function is as follows. IF-3 binds to the 30S ribosomal subunit and shifts the equilibrium between 70S ribosomes and their 50S and 30S subunits in favor of the free subunits, thus enhancing the availability of 30S subunits on which protein synthesis initiation begins. This Salmonella typhi protein is Translation initiation factor IF-3.